Reading from the N-terminus, the 227-residue chain is Transcription antitermination protein NusB (227 aa).

2 disordered regions span residues 165–189 (ASES…SDED) and 201–227 (AEET…ADES). 2 stretches are compositionally biased toward acidic residues: residues 178–189 (DDSDALDDSDED) and 201–214 (AEET…AEDS). Over residues 215 to 227 (EVSKVSEEKADES) the composition is skewed to basic and acidic residues.

The protein belongs to the NusB family.

Involved in transcription antitermination. Required for transcription of ribosomal RNA (rRNA) genes. Binds specifically to the boxA antiterminator sequence of the ribosomal RNA (rrn) operons. The protein is Transcription antitermination protein NusB of Corynebacterium glutamicum (strain ATCC 13032 / DSM 20300 / JCM 1318 / BCRC 11384 / CCUG 27702 / LMG 3730 / NBRC 12168 / NCIMB 10025 / NRRL B-2784 / 534).